The primary structure comprises 1273 residues: Kinesin-like protein KIN-7O (1273 aa).

One can recognise a Kinesin motor domain in the interval 3-327; sequence RIHVSVRARP…LQFASRALRV (325 aa). 79-86 serves as a coordination point for ATP; the sequence is GQTNSGKT. Positions 333-408 form a coiled coil; it reads VNEILTDAAL…QRERVLQEQA (76 aa). Positions 452 to 474 are disordered; the sequence is SEDQSNVLSRGSSLESARSERET. Polar residues predominate over residues 453–467; the sequence is EDQSNVLSRGSSLES. 2 coiled-coil regions span residues 602 to 674 and 751 to 1023; these read EAIL…ESEV and VQSS…MEEE.

This sequence belongs to the TRAFAC class myosin-kinesin ATPase superfamily. Kinesin family. KIN-7 subfamily.

The polypeptide is Kinesin-like protein KIN-7O (Arabidopsis thaliana (Mouse-ear cress)).